Here is a 123-residue protein sequence, read N- to C-terminus: UPF0299 membrane protein VV1471 (123 aa).

4 consecutive transmembrane segments (helical) span residues 8 to 28 (LFGL…GSGI), 35 to 55 (SVPG…IGLV), 71 to 91 (MILL…MLIA), and 94 to 114 (LPII…LGWL).

Belongs to the UPF0299 family.

The protein resides in the cell inner membrane. This Vibrio vulnificus (strain YJ016) protein is UPF0299 membrane protein VV1471.